A 1014-amino-acid polypeptide reads, in one-letter code: Probable transport protein MmpL11 (1014 aa).

12 helical membrane passes run 13-33 (WLVF…AMTQ), 156-173 (VRLY…VAAN), 188-208 (IILI…VPLA), 235-255 (TSTV…FILM), 279-299 (GLAV…IYLI), 311-331 (AILA…AALA), 373-393 (ASAA…MMLG), 530-550 (TEPL…LISI), 560-580 (VLMT…VFQW), 598-618 (VPPL…IFLL), 649-669 (AALI…PLVA), and 671-691 (IGVA…LVLV). The disordered stretch occupies residues 783–802 (SDRVLPGAATQESEEDPAMG).

It belongs to the resistance-nodulation-cell division (RND) (TC 2.A.6) family. MmpL subfamily.

Its subcellular location is the cell membrane. The chain is Probable transport protein MmpL11 (mmpL11) from Mycobacterium leprae (strain TN).